The chain runs to 166 residues: Disulfide bond reductase DsbH (166 aa).

Positions 1 to 22 (MKFWLQGCAFVGCLLLTLPCCA) are cleaved as a signal peptide. The Thioredoxin domain maps to 32 to 166 (LQQTRPIAAA…SKVKSALKLR (135 aa)). Cysteines 72 and 75 form a disulfide. 73-74 (MW) is a binding site for substrate.

In terms of assembly, monomer.

The protein localises to the periplasm. In terms of biological role, catalyzes the reduction of disulfide bonds. May function in reducing intermolecular disulfides between proteins and small molecules in the periplasm, or keeping a specific subset of periplasmic proteins reduced, or maintaining the periplasm of Chlamydia in a generally reducing state. Seems to be unable to oxidize thiols into disulfides and does not display disulfide bond isomerase activity. The chain is Disulfide bond reductase DsbH (dsbH) from Chlamydia pneumoniae (Chlamydophila pneumoniae).